Reading from the N-terminus, the 274-residue chain is Dermonecrotic toxin SdSicTox-betaIIB1bii (274 aa).

Residue histidine 5 is part of the active site. Residues glutamate 25 and aspartate 27 each coordinate Mg(2+). Catalysis depends on histidine 41, which acts as the Nucleophile. Intrachain disulfides connect cysteine 45–cysteine 51 and cysteine 47–cysteine 190. Aspartate 85 contacts Mg(2+).

Belongs to the arthropod phospholipase D family. Class II subfamily. Mg(2+) is required as a cofactor. In terms of tissue distribution, expressed by the venom gland.

The protein localises to the secreted. It carries out the reaction an N-(acyl)-sphingosylphosphocholine = an N-(acyl)-sphingosyl-1,3-cyclic phosphate + choline. It catalyses the reaction an N-(acyl)-sphingosylphosphoethanolamine = an N-(acyl)-sphingosyl-1,3-cyclic phosphate + ethanolamine. The enzyme catalyses a 1-acyl-sn-glycero-3-phosphocholine = a 1-acyl-sn-glycero-2,3-cyclic phosphate + choline. The catalysed reaction is a 1-acyl-sn-glycero-3-phosphoethanolamine = a 1-acyl-sn-glycero-2,3-cyclic phosphate + ethanolamine. In terms of biological role, dermonecrotic toxins cleave the phosphodiester linkage between the phosphate and headgroup of certain phospholipids (sphingolipid and lysolipid substrates), forming an alcohol (often choline) and a cyclic phosphate. This toxin acts on sphingomyelin (SM). It may also act on ceramide phosphoethanolamine (CPE), lysophosphatidylcholine (LPC) and lysophosphatidylethanolamine (LPE), but not on lysophosphatidylserine (LPS), and lysophosphatidylglycerol (LPG). It acts by transphosphatidylation, releasing exclusively cyclic phosphate products as second products. Induces dermonecrosis, hemolysis, increased vascular permeability, edema, inflammatory response, and platelet aggregation. The protein is Dermonecrotic toxin SdSicTox-betaIIB1bii of Sicarius cf. damarensis (strain GJB-2008) (Six-eyed sand spider).